A 75-amino-acid chain; its full sequence is UPF0352 protein ESA_01049 (75 aa).

The protein belongs to the UPF0352 family.

This chain is UPF0352 protein ESA_01049, found in Cronobacter sakazakii (strain ATCC BAA-894) (Enterobacter sakazakii).